The following is an 896-amino-acid chain: Translation initiation factor IF-2 (896 aa).

Residues 32-306 (LAQAGSSDTK…HKTKKQSEEH (275 aa)) are disordered. Polar residues-rich tracts occupy residues 35-48 (AGSSDTKNSPVSKA) and 114-126 (ADSTEPLSNSSQE). The span at 156-170 (ARNEETPIIRTRTEP) shows a compositional bias: basic and acidic residues. Residues 213–237 (QQTRPSVETASTKQQQPSGTNTRPA) show a composition bias toward polar residues. Positions 256–280 (RGPDRDRTKRSDENVKAFTGRDRYG) are enriched in basic and acidic residues. The tr-type G domain occupies 401–570 (IRSPIVAFMG…ALQAEVLELK (170 aa)). The segment at 410 to 417 (GHVDHGKT) is G1. Position 410–417 (410–417 (GHVDHGKT)) interacts with GTP. Positions 435-439 (AITQH) are G2. The tract at residues 456–459 (DTPG) is G3. Residues 456–460 (DTPGH) and 510–513 (NKCD) contribute to the GTP site. The G4 stretch occupies residues 510 to 513 (NKCD). The G5 stretch occupies residues 546-548 (SAK).

The protein belongs to the TRAFAC class translation factor GTPase superfamily. Classic translation factor GTPase family. IF-2 subfamily.

It localises to the cytoplasm. In terms of biological role, one of the essential components for the initiation of protein synthesis. Protects formylmethionyl-tRNA from spontaneous hydrolysis and promotes its binding to the 30S ribosomal subunits. Also involved in the hydrolysis of GTP during the formation of the 70S ribosomal complex. The polypeptide is Translation initiation factor IF-2 (infB) (Chlamydia muridarum (strain MoPn / Nigg)).